The chain runs to 364 residues: Putative agmatine deiminase 1 (364 aa).

The active-site Amidino-cysteine intermediate is the C356.

This sequence belongs to the agmatine deiminase family.

It carries out the reaction agmatine + H2O = N-carbamoylputrescine + NH4(+). The chain is Putative agmatine deiminase 1 from Listeria monocytogenes serotype 4b (strain F2365).